The primary structure comprises 465 residues: MKHIVKQIHFVGIGGAGMSGIAEVLVNLGYEVSGSDLSRNAVTDRLEALGARIAIGHDAANIAGANAVVVSTAVRSDNPEVLAARHQGVPIVQRAVMLAELMRLKQGIAIAGTHGKTTTTSLVASVLAAGGLDPTFVIGGRLISAGANARLGTGDFIVAEADESDASFLNLYPVIEVITNIDADHMDTYGHDFARLKQAFIEFTQRLPFYGSAVVCVDDPNVRQIIPFISKPVVRYGLSPDAQVRAEDIDARDGRMHFTVIREGRAPLAVVLNLPGLHNVQNALAAIAIATDLGVSDDAIQQALAEFNGVGRRFQRYGEVPSADGGQYTLIDDYGHHPVEMAATVAAARGAFPGRRLVLAFQPHRYTRTRDCFDDFVNVLSTVDALVLTEVYAAGEAAITTANGDALSRALRAVGRVDPVFVASVDDVPDALAGVARNGDVVITMGAGSIGGVPAKIVQHIQQKA.

112–118 (GTHGKTT) is a binding site for ATP.

It belongs to the MurCDEF family.

Its subcellular location is the cytoplasm. It carries out the reaction UDP-N-acetyl-alpha-D-muramate + L-alanine + ATP = UDP-N-acetyl-alpha-D-muramoyl-L-alanine + ADP + phosphate + H(+). It functions in the pathway cell wall biogenesis; peptidoglycan biosynthesis. Its function is as follows. Cell wall formation. The sequence is that of UDP-N-acetylmuramate--L-alanine ligase from Burkholderia ambifaria (strain ATCC BAA-244 / DSM 16087 / CCUG 44356 / LMG 19182 / AMMD) (Burkholderia cepacia (strain AMMD)).